We begin with the raw amino-acid sequence, 499 residues long: uncharacterized protein (499 aa).

The next 11 membrane-spanning stretches (helical) occupy residues 5–25, 79–99, 110–130, 132–152, 170–190, 203–223, 252–272, 286–306, 332–352, 354–374, and 377–397; these read FLLVLIPVLILYFYNLGYNAV, LGLRFFHALLGVFTGVLTYLL, ALLSFLILSLSFIFIANARYA, PEVPFTFFITLSLYLWYEYFT, VLTKGPAGFVLPAGVVFFYLL, YAGTLMVFLLSGWWFLYQYLV, ALDINVSFLPYSFLFFFALFW, VWFSFIFLIFSIVKMKIPVYI, LSLIFLWTVLVLATLALSLYF, FSATLFPLIPLLLLPFFLKKY, and LPAFGAFAFLFYLSSVILPYV.

The protein belongs to the glycosyltransferase 39 family.

It is found in the cell membrane. This is an uncharacterized protein from Aquifex aeolicus (strain VF5).